A 265-amino-acid chain; its full sequence is MKAVLLTLAVLFLTGSQARHFWQQDDPQSSWDRVKDFATVYVDAIKDSGRDYVAQFEASALGKQLNLKLLDNWDSLTSTFAKVREQLGPVTQEFWDNLEKETESLRQEMNKDLEEVKQKVQPYLDEFQKKWQEELQIYRQKVAPLGEELREGARQKVQELQDKLTPLAEEMRDRARSHVETLRQQLAPYSDDLRQRMAARFEMLKAGGGSLAEYHAKASEQLRALGEKAKPALEDLRQGLVPVLESLKVSILAAIDEASKKLNAQ.

Positions 1 to 18 (MKAVLLTLAVLFLTGSQA) are cleaved as a signal peptide. 2 tandem repeats follow at residues 67 to 88 (LKLLDNWDSLTSTFAKVREQLG) and 89 to 110 (PVTQEFWDNLEKETESLRQEMN). Residues 67-265 (LKLLDNWDSL…DEASKKLNAQ (199 aa)) are 10 X approximate tandem repeats. Met-109 is subject to Methionine sulfoxide. Residues 111–121 (KDLEEVKQKVQ) form a 3; half-length repeat. 5 repeat units span residues 122–142 (PYLDEFQKKWQEELQIYRQKV), 144–165 (PLGEELREGARQKVQELQDKLT), 166–187 (PLAEEMRDRARSHVETLRQQLA), 188–209 (PYSDDLRQRMAARFEMLKAGGG), and 210–230 (SLAEYHAKASEQLRALGEKAK). Residues 231-241 (PALEDLRQGLV) form a 9; half-length repeat. The stretch at 242-265 (PVLESLKVSILAAIDEASKKLNAQ) is repeat 10.

The protein belongs to the apolipoprotein A1/A4/E family. In terms of assembly, homodimer. Interacts with APOA1BP and CLU. Component of a sperm activating protein complex (SPAP), consisting of APOA1, an immunoglobulin heavy chain, an immunoglobulin light chain and albumin. Interacts with NDRG1. Interacts with SCGB3A2. Interacts with NAXE and YJEFN3. In terms of processing, glycosylated. Post-translationally, palmitoylated. Phosphorylation sites are present in the extracellular medium. Major protein of plasma HDL, also found in chylomicrons.

It is found in the secreted. In terms of biological role, participates in the reverse transport of cholesterol from tissues to the liver for excretion by promoting cholesterol efflux from tissues and by acting as a cofactor for the lecithin cholesterol acyltransferase (LCAT). As part of the SPAP complex, activates spermatozoa motility. The sequence is that of Apolipoprotein A-I (APOA1) from Tursiops truncatus (Atlantic bottle-nosed dolphin).